The primary structure comprises 229 residues: uncharacterized protein (229 aa).

Transmembrane regions (helical) follow at residues 21 to 41, 56 to 76, 83 to 103, 109 to 129, 141 to 161, 162 to 182, and 202 to 222; these read IYSLVGMGVGLSAFVSYLMLY, MIYYGAAIIELILVFVASGAA, ALPIFLIYSALNGFTLSFIIV, TVFQAFLSSAAVFFAMSIIGV, AMFAALIGVVVASLINLFIGS, GMMSYVISVISVLIFSGLIAS, and WAVAMALSLYLDFINLFISLL.

It belongs to the BI1 family.

It is found in the cell membrane. This is an uncharacterized protein from Streptococcus pyogenes serotype M6 (strain ATCC BAA-946 / MGAS10394).